The chain runs to 229 residues: Large ribosomal subunit protein uL1 (229 aa).

The protein belongs to the universal ribosomal protein uL1 family. In terms of assembly, part of the 50S ribosomal subunit.

Functionally, binds directly to 23S rRNA. The L1 stalk is quite mobile in the ribosome, and is involved in E site tRNA release. Protein L1 is also a translational repressor protein, it controls the translation of the L11 operon by binding to its mRNA. The chain is Large ribosomal subunit protein uL1 from Streptococcus pneumoniae (strain JJA).